A 287-amino-acid polypeptide reads, in one-letter code: 4-diphosphocytidyl-2-C-methyl-D-erythritol kinase (287 aa).

The active site involves K10. 94-104 contacts ATP; that stretch reads PVAAGLGGGSA. The active site involves D136.

Belongs to the GHMP kinase family. IspE subfamily.

It catalyses the reaction 4-CDP-2-C-methyl-D-erythritol + ATP = 4-CDP-2-C-methyl-D-erythritol 2-phosphate + ADP + H(+). It participates in isoprenoid biosynthesis; isopentenyl diphosphate biosynthesis via DXP pathway; isopentenyl diphosphate from 1-deoxy-D-xylulose 5-phosphate: step 3/6. Catalyzes the phosphorylation of the position 2 hydroxy group of 4-diphosphocytidyl-2C-methyl-D-erythritol. This chain is 4-diphosphocytidyl-2-C-methyl-D-erythritol kinase, found in Pelotomaculum thermopropionicum (strain DSM 13744 / JCM 10971 / SI).